Reading from the N-terminus, the 364-residue chain is UDP-N-acetylglucosamine--N-acetylmuramyl-(pentapeptide) pyrophosphoryl-undecaprenol N-acetylglucosamine transferase (364 aa).

Residues 14 to 16 (TGG), Asn126, Arg163, Ser190, Ile246, 265 to 270 (ALTVSE), and Gln291 contribute to the UDP-N-acetyl-alpha-D-glucosamine site.

This sequence belongs to the glycosyltransferase 28 family. MurG subfamily.

The protein localises to the cell inner membrane. The enzyme catalyses di-trans,octa-cis-undecaprenyl diphospho-N-acetyl-alpha-D-muramoyl-L-alanyl-D-glutamyl-meso-2,6-diaminopimeloyl-D-alanyl-D-alanine + UDP-N-acetyl-alpha-D-glucosamine = di-trans,octa-cis-undecaprenyl diphospho-[N-acetyl-alpha-D-glucosaminyl-(1-&gt;4)]-N-acetyl-alpha-D-muramoyl-L-alanyl-D-glutamyl-meso-2,6-diaminopimeloyl-D-alanyl-D-alanine + UDP + H(+). It participates in cell wall biogenesis; peptidoglycan biosynthesis. Its function is as follows. Cell wall formation. Catalyzes the transfer of a GlcNAc subunit on undecaprenyl-pyrophosphoryl-MurNAc-pentapeptide (lipid intermediate I) to form undecaprenyl-pyrophosphoryl-MurNAc-(pentapeptide)GlcNAc (lipid intermediate II). This chain is UDP-N-acetylglucosamine--N-acetylmuramyl-(pentapeptide) pyrophosphoryl-undecaprenol N-acetylglucosamine transferase, found in Shewanella loihica (strain ATCC BAA-1088 / PV-4).